The following is a 354-amino-acid chain: Holliday junction branch migration complex subunit RuvB (354 aa).

The tract at residues 4–198 (TTDYGASNTG…FGFTAHLDFY (195 aa)) is large ATPase domain (RuvB-L). Residues L37, R38, G79, K82, T83, T84, 145-147 (EDF), R188, Y198, and R235 contribute to the ATP site. T83 is a Mg(2+) binding site. Positions 199-269 (PHEELEKLIE…DVKEALALYQ (71 aa)) are small ATPAse domain (RuvB-S). Residues 272–354 (SEGLDRLDIA…TPKDDVSKLF (83 aa)) are head domain (RuvB-H). DNA is bound by residues R327 and R332.

Belongs to the RuvB family. As to quaternary structure, homohexamer. Forms an RuvA(8)-RuvB(12)-Holliday junction (HJ) complex. HJ DNA is sandwiched between 2 RuvA tetramers; dsDNA enters through RuvA and exits via RuvB. An RuvB hexamer assembles on each DNA strand where it exits the tetramer. Each RuvB hexamer is contacted by two RuvA subunits (via domain III) on 2 adjacent RuvB subunits; this complex drives branch migration. In the full resolvosome a probable DNA-RuvA(4)-RuvB(12)-RuvC(2) complex forms which resolves the HJ.

It is found in the cytoplasm. The enzyme catalyses ATP + H2O = ADP + phosphate + H(+). In terms of biological role, the RuvA-RuvB-RuvC complex processes Holliday junction (HJ) DNA during genetic recombination and DNA repair, while the RuvA-RuvB complex plays an important role in the rescue of blocked DNA replication forks via replication fork reversal (RFR). RuvA specifically binds to HJ cruciform DNA, conferring on it an open structure. The RuvB hexamer acts as an ATP-dependent pump, pulling dsDNA into and through the RuvAB complex. RuvB forms 2 homohexamers on either side of HJ DNA bound by 1 or 2 RuvA tetramers; 4 subunits per hexamer contact DNA at a time. Coordinated motions by a converter formed by DNA-disengaged RuvB subunits stimulates ATP hydrolysis and nucleotide exchange. Immobilization of the converter enables RuvB to convert the ATP-contained energy into a lever motion, pulling 2 nucleotides of DNA out of the RuvA tetramer per ATP hydrolyzed, thus driving DNA branch migration. The RuvB motors rotate together with the DNA substrate, which together with the progressing nucleotide cycle form the mechanistic basis for DNA recombination by continuous HJ branch migration. Branch migration allows RuvC to scan DNA until it finds its consensus sequence, where it cleaves and resolves cruciform DNA. This chain is Holliday junction branch migration complex subunit RuvB, found in Bifidobacterium longum (strain NCC 2705).